The sequence spans 718 residues: Putative aminodeoxychorismate synthase (718 aa).

Residues 9-203 form the Glutamine amidotransferase type-1 domain; it reads QILLIDCYDS…LSLADTPNIQ (195 aa). The Nucleophile role is filled by Cys-88. Residues His-177 and Glu-179 contribute to the active site. The interval 266 to 718 is PABB component; sequence FLDSAKKPGR…NLKNKKRSCK (453 aa).

The protein in the C-terminal section; belongs to the anthranilate synthase component I family.

The protein localises to the cytoplasm. It localises to the nucleus. It catalyses the reaction chorismate + L-glutamine = 4-amino-4-deoxychorismate + L-glutamate. It participates in cofactor biosynthesis; tetrahydrofolate biosynthesis; 4-aminobenzoate from chorismate: step 1/2. In terms of biological role, catalyzes the biosynthesis of 4-amino-4-deoxychorismate (ADC) from chorismate and glutamine. Required for the synthesis of 4-aminobenzoate (PABA), an important component in tetrahydrofolate biosynthesis. This is Putative aminodeoxychorismate synthase from Schizosaccharomyces pombe (strain 972 / ATCC 24843) (Fission yeast).